The primary structure comprises 96 residues: MNTSARLLALVSKSKNNWILQQGDTKLFKSFRFKNFIEAWGFMSCVALRAQQLNHHPEWTNVYNKVDITLTTHDTKGLTEKDLKLAEFIDTLAKDN.

It belongs to the pterin-4-alpha-carbinolamine dehydratase family.

Its subcellular location is the spore wall. It carries out the reaction (4aS,6R)-4a-hydroxy-L-erythro-5,6,7,8-tetrahydrobiopterin = (6R)-L-erythro-6,7-dihydrobiopterin + H2O. Functionally, has a role in spore wall formation. In Schizosaccharomyces pombe (strain 972 / ATCC 24843) (Fission yeast), this protein is Pterin-4-alpha-carbinolamine dehydratase (omt2).